The sequence spans 912 residues: Androgen receptor (912 aa).

The modulating stretch occupies residues 1–550 (MEVQLGLGRV…PIDYYFPPQK (550 aa)). The interaction with ZNF318 stretch occupies residues 1–579 (MEVQLGLGRV…GSCKVFFKRA (579 aa)). Disordered stretches follow at residues 35–156 (QNPG…GPTF) and 204–236 (QQQQ…YLGG). Ser69 carries the post-translational modification Phosphoserine; by CDK9. At Ser82 the chain carries Phosphoserine. Positions 204–213 (QQQQEVVSEG) are enriched in low complexity. Positions 226-236 (PTSSKDSYLGG) are enriched in polar residues. At Tyr233 the chain carries Phosphotyrosine; by CSK. Ser266 is modified (phosphoserine). Tyr277 carries the post-translational modification Phosphotyrosine; by CSK and TNK2. Phosphotyrosine; by CSK is present on residues Tyr315, Tyr354, Tyr365, and Tyr370. Phosphotyrosine; by CSK and TNK2 is present on Tyr371. Residues 375 to 394 (LSLAGPPPPPPSPHPHARIK) are disordered. The segment covering 379–388 (GPPPPPPSPH) has biased composition (pro residues). Lys394 participates in a covalent cross-link: Glycyl lysine isopeptide (Lys-Gly) (interchain with G-Cter in SUMO). Tyr401 is modified (phosphotyrosine; by CSK). The tract at residues 452-490 (LYGPCGGSGGGGTGESVSVTPYGYTRPQQGLTGQEGDFP) is disordered. Positions 455–465 (PCGGSGGGGTG) are enriched in gly residues. Lys513 participates in a covalent cross-link: Glycyl lysine isopeptide (Lys-Gly) (interchain with G-Cter in SUMO). Phosphotyrosine; by CSK is present on residues Tyr527 and Tyr544. Positions 544–911 (YYFPPQKTCL…GKVKPIYFHT (368 aa)) are interaction with LPXN. The segment at residues 551 to 624 (TCLICGDEAS…AGMTLGARRL (74 aa)) is a DNA-binding region (nuclear receptor). 2 NR C4-type zinc fingers span residues 552–572 (CLIC…CGSC) and 588–612 (CASR…LRKC). The segment at 564 to 654 (YGALTCGSCK…TEETTQKLTV (91 aa)) is interaction with HIPK3. An interaction with CCAR1 region spans residues 584-911 (QKYLCASRND…GKVKPIYFHT (328 aa)). An interaction with KAT7 region spans residues 617–911 (MTLGARRLKK…GKVKPIYFHT (295 aa)). Ser643 is modified (phosphoserine; by STK4/MST1). Positions 661 to 892 (ECQPIFLNVL…DFPEMMAEII (232 aa)) constitute an NR LBD domain. Residues Asn698 and Arg745 each contribute to the 17beta-hydroxy-5alpha-androstan-3-one site. Glycyl lysine isopeptide (Lys-Gly) (interchain with G-Cter in ubiquitin) cross-links involve residues Lys838 and Lys840. Residue Thr870 participates in 17beta-hydroxy-5alpha-androstan-3-one binding. A Phosphotyrosine; by CSK modification is found at Tyr908.

Belongs to the nuclear hormone receptor family. NR3 subfamily. Binds DNA as a homodimer. Part of a ternary complex containing AR, EFCAB6/DJBP and PARK7. Interacts with HIPK3 and NR0B2 in the presence of androgen. The ligand binding domain interacts with KAT7/HBO1 in the presence of dihydrotestosterone. Interacts with EFCAB6/DJBP, PQBP1, RANBP9, RBAK, SPDEF, SRA1, TGFB1I1 and RREB1. Interacts with ZMIZ1/ZIMP10 and ZMIZ2/ZMIP7 which both enhance its transactivation activity. Interacts with SLC30A9 and RAD54L2/ARIP4. Interacts with MACROD1 (via macro domain). Interacts via the ligand-binding domain with LXXLL and FXXLF motifs from NCOA1, NCOA2, NCOA3 and MAGEA11. Interacts (via nuclear receptor DNA binding domain and nuclear receptor ligand binding domain) with NCOA4. The AR N-terminal poly-Gln region binds Ran resulting in enhancement of AR-mediated transactivation. Ran-binding decreases as the poly-Gln length increases. Interacts with HIP1 (via coiled coil domain). Interacts (via ligand-binding domain) with TRIM68. Interacts with TNK2. Interacts with USP26. Interacts with RNF6. Interacts (regulated by RNF6 probably through polyubiquitination) with RNF14; regulates AR transcriptional activity. Interacts with PRMT2 and TRIM24. Interacts with RACK1. Interacts with RANBP10; this interaction enhances dihydrotestosterone-induced AR transcriptional activity. Interacts with PRPF6 in a hormone-independent way; this interaction enhances dihydrotestosterone-induced AR transcriptional activity. Interacts with STK4/MST1. Interacts with ZIPK/DAPK3. Interacts with LPXN. Interacts with MAK. Part of a complex containing AR, MAK and NCOA3. Interacts with CRY1. Interacts with CCAR1 and GATA2. Interacts with ZNF318. Interacts with BUD31. Interacts with ARID4A. Interacts with ARID4B. Interacts (via NR LBD domain) with ZBTB7A; the interaction is direct and androgen-dependent. Interacts with NCOR1. Interacts with NCOR2. Interacts with CRY2 in a ligand-dependent manner. Post-translationally, phosphorylation by TNK2 enhances the DNA-binding and transcriptional activity. Phosphorylation at Ser-69 by CDK9 regulates AR promoter selectivity and cell growth. In terms of processing, sumoylated on Lys-394 (major) and Lys-513. Ubiquitinated. Deubiquitinated by USP26. 'Lys-6' and 'Lys-27'-linked polyubiquitination by RNF6 modulates AR transcriptional activity and specificity. Palmitoylated by ZDHHC7 and ZDHHC21. Palmitoylation is required for plasma membrane targeting and for rapid intracellular signaling via ERK and AKT kinases and cAMP generation.

The protein localises to the nucleus. It is found in the cytoplasm. In terms of biological role, steroid hormone receptors are ligand-activated transcription factors that regulate eukaryotic gene expression and affect cellular proliferation and differentiation in target tissues. Transcription factor activity is modulated by bound coactivator and corepressor proteins like ZBTB7A that recruits NCOR1 and NCOR2 to the androgen response elements/ARE on target genes, negatively regulating androgen receptor signaling and androgen-induced cell proliferation. Transcription activation is also down-regulated by NR0B2. Activated, but not phosphorylated, by HIPK3 and ZIPK/DAPK3. The chain is Androgen receptor (AR) from Crocuta crocuta (Spotted hyena).